Reading from the N-terminus, the 334-residue chain is Endoplasmic reticulum junction formation protein lunapark (334 aa).

Topologically, residues 1-40 are cytoplasmic; that stretch reads MGWFFQKKKEFDFGGELDRLEMKLEEAQYNIDNIQSQKKK. Residues 12–42 are a coiled coil; that stretch reads DFGGELDRLEMKLEEAQYNIDNIQSQKKKIL. The chain crosses the membrane as a helical span at residues 41 to 61; that stretch reads ILFRYTVCSLAIYTIGMAVWA. Residues 62-78 are Lumenal-facing; sequence SRSSILFQHPLFSKLFR. Residues 79–99 form a helical membrane-spanning segment; that stretch reads ISLYILGVFSLYMFRWAIAWF. The stretch at 99–127 forms a coiled coil; the sequence is FCEKRLSRARMNLHKLNAEKRKILDALKS. Over 100–334 the chain is Cytoplasmic; the sequence is CEKRLSRARM…SVPESLTPTK (235 aa). Residues 201 to 227 form a C4-type; plays a role in ER morphology zinc finger; sequence CSHCFHHNGLASYGEKASDVRYVCLFC. A disordered region spans residues 237–315; it reads KSLPSSEMDS…SSPDASYNSV (79 aa). Residues 239–252 show a composition bias toward polar residues; it reads LPSSEMDSNLQTNP. Over residues 253 to 270 the composition is skewed to low complexity; it reads SSISKGKKNNSNNTTQKG. Residues 273–283 show a composition bias toward polar residues; the sequence is IISSPQVINAS. At serine 284 the chain carries Phosphoserine. Over residues 297-315 the composition is skewed to low complexity; that stretch reads ALPTSPLSSSSPDASYNSV.

The protein belongs to the lunapark family.

Its subcellular location is the endoplasmic reticulum membrane. It localises to the golgi apparatus membrane. Functionally, plays a role in tubular endoplasmic reticulum network formation and maintenance. The polypeptide is Endoplasmic reticulum junction formation protein lunapark (lnp1) (Schizosaccharomyces pombe (strain 972 / ATCC 24843) (Fission yeast)).